The chain runs to 326 residues: Beta-ketoacyl-[acyl-carrier-protein] synthase III (326 aa).

Active-site residues include Cys120 and His253. Positions 254 to 258 are ACP-binding; it reads QANIR. The active site involves Asn283.

This sequence belongs to the thiolase-like superfamily. FabH family. As to quaternary structure, homodimer.

Its subcellular location is the cytoplasm. It carries out the reaction malonyl-[ACP] + acetyl-CoA + H(+) = 3-oxobutanoyl-[ACP] + CO2 + CoA. It participates in lipid metabolism; fatty acid biosynthesis. Catalyzes the condensation reaction of fatty acid synthesis by the addition to an acyl acceptor of two carbons from malonyl-ACP. Catalyzes the first condensation reaction which initiates fatty acid synthesis and may therefore play a role in governing the total rate of fatty acid production. Possesses both acetoacetyl-ACP synthase and acetyl transacylase activities. Its substrate specificity determines the biosynthesis of branched-chain and/or straight-chain of fatty acids. The polypeptide is Beta-ketoacyl-[acyl-carrier-protein] synthase III (Cupriavidus necator (strain ATCC 17699 / DSM 428 / KCTC 22496 / NCIMB 10442 / H16 / Stanier 337) (Ralstonia eutropha)).